Reading from the N-terminus, the 352-residue chain is Protein-glutamate methylesterase/protein-glutamine glutaminase 2 (352 aa).

Positions 6–124 (KVLIVEDSLV…NAGYDTMAAK (119 aa)) constitute a Response regulatory domain. At Asp57 the chain carries 4-aspartylphosphate. The region spanning 162 to 343 (PGTYSMVGIV…LPLPAIAARL (182 aa)) is the CheB-type methylesterase domain. Catalysis depends on residues Ser173, His200, and Asp292.

Belongs to the CheB family. Phosphorylated by CheA. Phosphorylation of the N-terminal regulatory domain activates the methylesterase activity.

It is found in the cytoplasm. It carries out the reaction [protein]-L-glutamate 5-O-methyl ester + H2O = L-glutamyl-[protein] + methanol + H(+). The catalysed reaction is L-glutaminyl-[protein] + H2O = L-glutamyl-[protein] + NH4(+). Its function is as follows. Involved in chemotaxis. Part of a chemotaxis signal transduction system that modulates chemotaxis in response to various stimuli. Catalyzes the demethylation of specific methylglutamate residues introduced into the chemoreceptors (methyl-accepting chemotaxis proteins or MCP) by CheR. Also mediates the irreversible deamidation of specific glutamine residues to glutamic acid. This Paramagnetospirillum magneticum (strain ATCC 700264 / AMB-1) (Magnetospirillum magneticum) protein is Protein-glutamate methylesterase/protein-glutamine glutaminase 2.